The following is a 617-amino-acid chain: uncharacterized protein (617 aa).

Over residues 387 to 396 (NGGMSATQLP) the composition is skewed to polar residues. Disordered stretches follow at residues 387-419 (NGGMSATQLPAPTRDSQRQAAANQFQQRTHAAP) and 443-599 (YDDF…NNEQ). Positions 404–414 (RQAAANQFQQR) are enriched in low complexity. Polar residues predominate over residues 453–474 (QPLTQQQKDAARQRYQSASPEQ). 2 stretches are compositionally biased toward basic and acidic residues: residues 490 to 499 (QRREAARERI) and 522 to 531 (QRRDAARERI). Residues 549–570 (RPLNQQQRDNARQRVQSASPEQ) show a composition bias toward polar residues. Residues 572 to 585 (QVFREKVQESRPQR) show a composition bias toward basic and acidic residues. The segment covering 586–599 (LNDSNHTVRLNNEQ) has biased composition (polar residues).

This is an uncharacterized protein from Escherichia coli (strain K12).